Reading from the N-terminus, the 413-residue chain is Coiled-coil domain-containing protein 83 (413 aa).

Positions 1 to 21 (MENSGKANKKDTHDGPPKEIK) are disordered. Residues 8–21 (NKKDTHDGPPKEIK) show a composition bias toward basic and acidic residues. Coiled-coil stretches lie at residues 37–184 (EDAV…RKKI) and 216–256 (WEND…LSNC).

The sequence is that of Coiled-coil domain-containing protein 83 (CCDC83) from Homo sapiens (Human).